Here is a 795-residue protein sequence, read N- to C-terminus: Phenylalanine--tRNA ligase beta subunit (795 aa).

The tRNA-binding domain maps to Ala39–Arg148. Residues Pro401–Asn476 enclose the B5 domain. Positions 454, 460, 463, and 464 each coordinate Mg(2+). The 94-residue stretch at Ser701–Arg794 folds into the FDX-ACB domain.

This sequence belongs to the phenylalanyl-tRNA synthetase beta subunit family. Type 1 subfamily. In terms of assembly, tetramer of two alpha and two beta subunits. Requires Mg(2+) as cofactor.

It localises to the cytoplasm. The catalysed reaction is tRNA(Phe) + L-phenylalanine + ATP = L-phenylalanyl-tRNA(Phe) + AMP + diphosphate + H(+). The polypeptide is Phenylalanine--tRNA ligase beta subunit (Pectobacterium atrosepticum (strain SCRI 1043 / ATCC BAA-672) (Erwinia carotovora subsp. atroseptica)).